The sequence spans 443 residues: dTDP-4-dehydro-6-deoxy-alpha-D-glucopyranose 2,3-dehydratase (443 aa).

DTDP-4-dehydro-6-deoxy-alpha-D-glucose is bound by residues Trp35, Thr118–Tyr122, Ser157, Trp260, Arg325, Gln341–Asn343, Asn346–Leu347, and Glu377–Arg380.

This sequence belongs to the hexose 2,3-dehydratase family. Homodimer.

It catalyses the reaction dTDP-4-dehydro-6-deoxy-alpha-D-glucose = dTDP-3,4-didehydro-2,6-dideoxy-alpha-D-glucose + H2O. The protein operates within antibiotic biosynthesis; granaticin biosynthesis. Functionally, involved in the biosynthesis of the 2,6-deoxysugar, dTDP-L-rhodinose, attached to the benzoisochromane quinone chromophore to produce the aglycone antibiotics granaticin and granaticin B. Catalyzes the removal of the hydroxyl group at position C-2 of the hexose ring of dTDP-4-dehydro-6-deoxy-alpha-D-glucopyranose, and the oxidation of the hydroxyl group at position C-3 to form a carbonyl functionality. The product of the reaction, dTDP-2,6-dideoxy-D-glycero-hex-2-enos-4-ulose, is a highly unstable diketosugar, which spontaneously forms dTDP-3,4-didehydro-2,6-dideoxy-alpha-D-glucose. This is dTDP-4-dehydro-6-deoxy-alpha-D-glucopyranose 2,3-dehydratase from Streptomyces violaceoruber.